The following is a 308-amino-acid chain: 4-hydroxyproline 2-epimerase (308 aa).

The Proton acceptor role is filled by cysteine 88. Residues 89–90 (GH), histidine 208, and aspartate 232 each bind substrate. Cysteine 236 acts as the Proton donor in catalysis. 237–238 (GT) contacts substrate.

The protein belongs to the proline racemase family.

It catalyses the reaction trans-4-hydroxy-L-proline = cis-4-hydroxy-D-proline. Functionally, catalyzes the reversible epimerization of cis-4-hydroxy-D-proline (c4DHyp) to trans-4-hydroxy-L-proline (t4LHyp). May be involved in a degradation pathway that allows P.putida strain KT2440 to grow on either epimer of 4-hydroxyproline, c4DHyp and t4LHyp, as the sole carbon and nitrogen source. Does not exhibit measureable racemase activity in vitro with any of the 19 natural chiral amino acid enantiomers. The protein is 4-hydroxyproline 2-epimerase of Pseudomonas putida (strain ATCC 47054 / DSM 6125 / CFBP 8728 / NCIMB 11950 / KT2440).